The sequence spans 316 residues: PAK4-inhibitor inka1 (316 aa).

The tract at residues 108–130 is disordered; that stretch reads YSEVSGSSLRGEEDDIVEEESET. Residues 119–128 show a composition bias toward acidic residues; the sequence is EEDDIVEEES. Inka box regions lie at residues 182 to 219 and 289 to 316; these read DSQD…DLPE and SDIA…AGFL.

This sequence belongs to the INKA family. In terms of assembly, interacts with pak4/pak5.

The protein resides in the nucleus. The protein localises to the cytoplasm. Inhibitor of the serine/threonine-protein kinase pak4/pak5. Acts by binding pak4/pak5 in a substrate-like manner, inhibiting the protein kinase activity. Required for the proper migration of neural crest cells during embryonic development, probably by inhibiting pak4/pak5. The protein is PAK4-inhibitor inka1 of Xenopus laevis (African clawed frog).